Consider the following 68-residue polypeptide: Large ribosomal subunit protein bL35 (68 aa).

Belongs to the bacterial ribosomal protein bL35 family.

The sequence is that of Large ribosomal subunit protein bL35 from Rickettsia canadensis (strain McKiel).